We begin with the raw amino-acid sequence, 43 residues long: Protein PsbN (43 aa).

Residues 7-27 (VAIFISGLLVSFTGYALYTAF) traverse the membrane as a helical segment.

It belongs to the PsbN family.

Its subcellular location is the plastid. It is found in the chloroplast thylakoid membrane. In terms of biological role, may play a role in photosystem I and II biogenesis. This is Protein PsbN from Sagittaria latifolia (Broadleaf arrowhead).